The following is a 172-amino-acid chain: Adenine phosphoribosyltransferase (172 aa).

Belongs to the purine/pyrimidine phosphoribosyltransferase family. As to quaternary structure, homodimer.

It localises to the cytoplasm. The catalysed reaction is AMP + diphosphate = 5-phospho-alpha-D-ribose 1-diphosphate + adenine. It participates in purine metabolism; AMP biosynthesis via salvage pathway; AMP from adenine: step 1/1. Catalyzes a salvage reaction resulting in the formation of AMP, that is energically less costly than de novo synthesis. The chain is Adenine phosphoribosyltransferase from Clostridium botulinum (strain Loch Maree / Type A3).